The primary structure comprises 401 residues: Mannan endo-1,4-beta-mannosidase 3 (401 aa).

Residues 1–24 (MSYTHRRSCISGLFLLLLALSCEA) form the signal peptide. Substrate is bound by residues Trp84 and Asn198. Catalysis depends on Glu199, which acts as the Proton donor. Tyr277 provides a ligand contact to substrate. The active-site Nucleophile is Glu317. Substrate is bound at residue Trp356.

Belongs to the glycosyl hydrolase 5 (cellulase A) family.

Its subcellular location is the secreted. The catalysed reaction is Random hydrolysis of (1-&gt;4)-beta-D-mannosidic linkages in mannans, galactomannans and glucomannans.. The chain is Mannan endo-1,4-beta-mannosidase 3 (MAN3) from Solanum lycopersicum (Tomato).